A 1250-amino-acid polypeptide reads, in one-letter code: TBC1 domain family member 9B (1250 aa).

GRAM domains follow at residues 142–209 (LKMR…EKNA) and 288–356 (ECYR…EKAD). The residue at position 397 (Thr-397) is a Phosphothreonine. The tract at residues 397-443 (TPSKQPGSIGSRKASVVDPSTESSPAPQEGSEQPASPASPLSSRQSF) is disordered. 4 positions are modified to phosphoserine: Ser-411, Ser-432, Ser-435, and Ser-463. Positions 414–443 (DPSTESSPAPQEGSEQPASPASPLSSRQSF) are enriched in polar residues. In terms of domain architecture, Rab-GAP TBC spans 508-695 (GIPESLRGEL…VIVDCFFYEG (188 aa)). The chain crosses the membrane as a helical span at residues 668 to 688 (LSWFLTLFLSVMPFESAVVIV). The EF-hand domain occupies 879 to 914 (HTPLLAGRMFRLLDENKDSLINFKEFVTGMSGMYHG). Disordered stretches follow at residues 974 to 999 (LPQE…PDYR), 1069 to 1093 (SART…ELHQ), and 1128 to 1157 (VEGG…MSSY). Residues 984-999 (SEERGEEKGTSSPDYR) show a composition bias toward basic and acidic residues. Phosphoserine is present on Ser-1241.

It localises to the membrane. Functionally, may act as a GTPase-activating protein for Rab family protein(s). This Homo sapiens (Human) protein is TBC1 domain family member 9B (TBC1D9B).